Here is a 530-residue protein sequence, read N- to C-terminus: 3-oxo-5-alpha-steroid 4-dehydrogenase (530 aa).

33–62 contacts FAD; sequence DVVVVGWGGAGASAAIEAREQGAEVLVIER. The chain crosses the membrane as a helical span at residues 395–415; sequence AWQCLFGGLWAFQSMPALALM.

It belongs to the FAD-dependent oxidoreductase 2 family. The cofactor is FAD.

Its subcellular location is the membrane. The enzyme catalyses a 3-oxo-5alpha-steroid + A = a 3-oxo-Delta(4)-steroid + AH2. The catalysed reaction is 5alpha-androstan-3,17-dione + A = androst-4-ene-3,17-dione + AH2. It carries out the reaction 5alpha-androst-1-ene-3,17-dione + A = androsta-1,4-diene-3,17-dione + AH2. With respect to regulation, inhibition occurs with substrate concentrations above 25 uM. Functionally, involved in the degradation of steroids having an A:B ring fusion in a trans configuration. Catalyzes the elimination of hydrogens located at positions 4 and 5 and the introduction of double bonds into ring A. The sequence is that of 3-oxo-5-alpha-steroid 4-dehydrogenase from Comamonas testosteroni (Pseudomonas testosteroni).